The chain runs to 451 residues: Secreted RxLR effector protein 70 (451 aa).

A signal peptide spans 1-17 (MRGAYYIITALLVVASS). The RxLR-dEER motif lies at 48-65 (RFLRESRDVHDDLANEER). Residues 303–336 (DAPSNSKHTLGGNKDSSSATTLHKHSKGLSSRPF) are disordered. Positions 305 to 323 (PSNSKHTLGGNKDSSSATT) are enriched in polar residues.

This sequence belongs to the RxLR effector family.

Its subcellular location is the secreted. The protein localises to the host nucleus. In terms of biological role, secreted effector that completely suppresses the host cell death induced by cell death-inducing proteins. The protein is Secreted RxLR effector protein 70 of Plasmopara viticola (Downy mildew of grapevine).